Here is a 321-residue protein sequence, read N- to C-terminus: MSTASINSCLTISPAQASLKKPTRPVAFARLSNSSSSTSVPSLIRNEPVFAAPTPIINPILREEMAKESYEQAIAALEKLLSEKGELGPIAAARVDQITAELQSSDGSKPFDPVEHMKAGFIHFKTEKYEKNPALYGELSKGQSPKFMVFACSDSRVCPSHVLNFQPGEAFVVRNIANMVPAYDKTRYSGVGAAIEYAVLHLKVENIVVIGHSACGGIKGLMSLPADGSESTAFIEDWVKIGLPAKAKVQGEHVDKCFADQCTACEKEAVNVSLGNLLTYPFVREGLVKKTLALKGGHYDFVNGGFELWGLEFGLSPSLSV.

Residues 1–100 (MSTASINSCL…AAARVDQITA (100 aa)) constitute a chloroplast transit peptide.

Belongs to the beta-class carbonic anhydrase family. In terms of assembly, homohexamer.

The protein resides in the plastid. Its subcellular location is the chloroplast stroma. The enzyme catalyses hydrogencarbonate + H(+) = CO2 + H2O. In terms of biological role, reversible hydration of carbon dioxide. This chain is Carbonic anhydrase, chloroplastic, found in Nicotiana tabacum (Common tobacco).